The primary structure comprises 385 residues: 1-deoxy-D-xylulose 5-phosphate reductoisomerase 1 (385 aa).

6 residues coordinate NADPH: Thr-11, Gly-12, Ser-13, Ile-14, Asn-39, and Asn-122. Lys-123 lines the 1-deoxy-D-xylulose 5-phosphate pocket. Residue Glu-124 participates in NADPH binding. Residue Asp-148 coordinates Mn(2+). 4 residues coordinate 1-deoxy-D-xylulose 5-phosphate: Ser-149, Glu-150, Ser-174, and His-197. Position 150 (Glu-150) interacts with Mn(2+). Position 203 (Gly-203) interacts with NADPH. 4 residues coordinate 1-deoxy-D-xylulose 5-phosphate: Ser-210, Asn-215, Lys-216, and Glu-219. A Mn(2+)-binding site is contributed by Glu-219.

Belongs to the DXR family. The cofactor is Mg(2+). Requires Mn(2+) as cofactor.

It catalyses the reaction 2-C-methyl-D-erythritol 4-phosphate + NADP(+) = 1-deoxy-D-xylulose 5-phosphate + NADPH + H(+). Its pathway is isoprenoid biosynthesis; isopentenyl diphosphate biosynthesis via DXP pathway; isopentenyl diphosphate from 1-deoxy-D-xylulose 5-phosphate: step 1/6. In terms of biological role, catalyzes the NADPH-dependent rearrangement and reduction of 1-deoxy-D-xylulose-5-phosphate (DXP) to 2-C-methyl-D-erythritol 4-phosphate (MEP). The chain is 1-deoxy-D-xylulose 5-phosphate reductoisomerase 1 from Bacillus cereus (strain ATCC 14579 / DSM 31 / CCUG 7414 / JCM 2152 / NBRC 15305 / NCIMB 9373 / NCTC 2599 / NRRL B-3711).